Consider the following 76-residue polypeptide: Membrane protein UL43 homolog (76 aa).

The next 2 membrane-spanning stretches (helical) occupy residues 7-27 and 54-74; these read AVCV…SLAF and ISRW…ATII.

It belongs to the alphaherpesvirinae HHV-1 UL43 family.

The protein localises to the membrane. This is Membrane protein UL43 homolog from Equus caballus (Horse).